Here is a 332-residue protein sequence, read N- to C-terminus: Twinfilin-1 (332 aa).

The ADF-H 1 domain maps to 5-132 (SGIVAEQALL…VDLKNFDSAR (128 aa)). S167 and S172 each carry phosphoserine. One can recognise an ADF-H 2 domain in the interval 173–300 (PLSLTFRVNS…DKSLLMATNK (128 aa)). Positions 301 to 332 (EDSLDHGSNPDLPNKSNLKFNKPKGPLRKRRT) are disordered. Positions 321–332 (NKPKGPLRKRRT) are enriched in basic residues.

It belongs to the actin-binding proteins ADF family. Twinfilin subfamily. Interacts with G-actin; ADP-actin form.

It localises to the cytoplasm. Its subcellular location is the cytoskeleton. Its function is as follows. Actin-binding protein involved in motile and morphological processes. Inhibits actin polymerization, likely by sequestering G-actin. Prevents actin filament assembly by forming a 1:1 complex with actin monomers, and inhibits the nucleotide exchange reaction of actin monomers. This Saccharomyces cerevisiae (strain ATCC 204508 / S288c) (Baker's yeast) protein is Twinfilin-1 (TWF1).